We begin with the raw amino-acid sequence, 132 residues long: Small ribosomal subunit protein uS8 (132 aa).

This sequence belongs to the universal ribosomal protein uS8 family. Part of the 30S ribosomal subunit. Contacts proteins S5 and S12.

In terms of biological role, one of the primary rRNA binding proteins, it binds directly to 16S rRNA central domain where it helps coordinate assembly of the platform of the 30S subunit. The sequence is that of Small ribosomal subunit protein uS8 from Mycolicibacterium smegmatis (strain ATCC 700084 / mc(2)155) (Mycobacterium smegmatis).